Here is an 87-residue protein sequence, read N- to C-terminus: Mu-theraphotoxin-Cg1a (87 aa).

The N-terminal stretch at M1–A21 is a signal peptide. The propeptide occupies A22–R50. 3 cysteine pairs are disulfide-bonded: C52–C66, C59–C71, and C65–C79.

This sequence belongs to the neurotoxin 10 (Hwtx-1) family. 39 (Jztx-34) subfamily. In terms of tissue distribution, expressed by the venom gland.

It is found in the secreted. Potent and selective inhibitor of hNav1.7/SCN9A (IC(50)=610 nM). Also shows a weak activity towards Nav1.3/SCN3A (IC(50)=7950 nM). In addition, inhibits voltage-gated potassium channels (Kv) in rat DRG neurons. It does not alter the voltage dependence of activation, but it causes a small hyperpolarizing shift in the steady-state inactivations of Nav1.7/SNC9A. Chimera experiments show that the toxin binds to the DIIS3-S4 linker (site 4) of Nav1.7/SCN9A, whereas Nav1.7/SCN9A Asp-827 residue is shown by substitution experiments to be critical for its sensitivity. The toxin traps the domain II voltage sensor in the closed configuration, and not in an outward position. In vivo, shows analgesic activity in three rodent pain models (formalin-induced, acid-induced, and thermal). This chain is Mu-theraphotoxin-Cg1a, found in Chilobrachys guangxiensis (Chinese earth tiger tarantula).